Here is a 341-residue protein sequence, read N- to C-terminus: 2-acylglycerol O-acyltransferase 3 (341 aa).

2 helical membrane-spanning segments follow: residues 29–49 and 50–70; these read YVLT…VLLF and TSLW…WDTP. A glycan (N-linked (GlcNAc...) asparagine) is linked at asparagine 126. A helical transmembrane segment spans residues 137–157; sequence LFPGLRPWLAVLAGLFYLPVY.

This sequence belongs to the diacylglycerol acyltransferase family. In terms of processing, ubiquitinated. Ubiquitination leads to proteasomal degradation. Selectively expressed in the digestive system. Highly expressed in the ileum, and at lower level in jejunum, duodenum, colon, cecum and the rectum. Not expressed in the stomach and the esophagus and trachea. Expressed at very low level in liver.

The protein localises to the endoplasmic reticulum membrane. It localises to the cytoplasm. Its subcellular location is the perinuclear region. It catalyses the reaction a 2-acylglycerol + an acyl-CoA = a 1,2-diacylglycerol + CoA. The enzyme catalyses an acyl-CoA + a 1,2-diacyl-sn-glycerol = a triacyl-sn-glycerol + CoA. It carries out the reaction 2-(9Z-octadecenoyl)-glycerol + (9Z)-octadecenoyl-CoA = 1,2-di-(9Z-octadecenoyl)-sn-glycerol + CoA. The catalysed reaction is 2-(9Z-octadecenoyl)-glycerol + hexadecanoyl-CoA = 1-hexadecanoyl-2-(9Z-octadecenoyl)-sn-glycerol + CoA. It catalyses the reaction 1,2-di-(9Z-octadecenoyl)-sn-glycerol + (9Z)-octadecenoyl-CoA = 1,2,3-tri-(9Z-octadecenoyl)-glycerol + CoA. The enzyme catalyses 1-hexadecanoyl-2-(9Z-octadecenoyl)-sn-glycerol + hexadecanoyl-CoA = 1,3-dihexadecanoyl-2-(9Z-octadecenoyl)glycerol + CoA. It carries out the reaction all-trans-retinol + hexadecanoyl-CoA = all-trans-retinyl hexadecanoate + CoA. The catalysed reaction is 1-O-(9Z-octadecenyl)-glycerol + (9Z)-octadecenoyl-CoA = 1-O-(9Z-octadecyl)-3-(9Z-octadecenoyl)-glycerol + CoA. It catalyses the reaction 1-O-(9Z-octadecyl)-3-(9Z-octadecenoyl)-glycerol + (9Z)-octadecenoyl-CoA = 1-O-(9Z-octadecenyl)-2,3-di-(9Z-octadecenoyl)glycerol + CoA. It participates in glycerolipid metabolism; triacylglycerol biosynthesis. In terms of biological role, catalyzes the formation of diacylglycerol from 2-monoacylglycerol and fatty acyl-CoA. Also able to catalyze the terminal step in triacylglycerol synthesis by using diacylglycerol and fatty acyl-CoA as substrates. Has a preference toward palmitoyl-CoA and oleoyl-CoA. May be involved in absorption of dietary fat in the small intestine by catalyzing the resynthesis of triacylglycerol in enterocytes. Also able to use 1-monoalkylglycerol (1-MAkG) as an acyl acceptor for the synthesis of monoalkyl-monoacylglycerol (MAMAG). This is 2-acylglycerol O-acyltransferase 3 from Homo sapiens (Human).